Here is a 278-residue protein sequence, read N- to C-terminus: 3-oxoacyl-[acyl-carrier-protein] reductase (278 aa).

NADP(+) is bound by residues Thr-13, Arg-14, Ile-16, Ser-36, Ser-40, Thr-44, Asp-66, Phe-67, Glu-77, Gly-122, Gln-125, and Glu-126. The active-site Proton donor is the Ser-182. Residues Tyr-198, Lys-202, Leu-230, and Val-231 each contribute to the NADP(+) site. The active-site Proton acceptor is Tyr-198. Lys-202 acts as the Lowers pKa of active site Tyr in catalysis.

The protein belongs to the short-chain dehydrogenases/reductases (SDR) family.

The protein localises to the mitochondrion. The catalysed reaction is a (3R)-hydroxyacyl-[ACP] + NADP(+) = a 3-oxoacyl-[ACP] + NADPH + H(+). Its pathway is lipid metabolism; fatty acid biosynthesis. Functionally, involved in biosynthesis of fatty acids in mitochondria. The protein is 3-oxoacyl-[acyl-carrier-protein] reductase (OAR1) of Saccharomyces cerevisiae (strain ATCC 204508 / S288c) (Baker's yeast).